Reading from the N-terminus, the 94-residue chain is UPF0768 protein YBL029C-A (94 aa).

This sequence belongs to the UPF0768 family.

It localises to the cell membrane. The chain is UPF0768 protein YBL029C-A from Saccharomyces cerevisiae (strain ATCC 204508 / S288c) (Baker's yeast).